The chain runs to 480 residues: Glutamyl-tRNA(Gln) amidotransferase subunit A (480 aa).

Active-site charge relay system residues include K74 and S149. S173 functions as the Acyl-ester intermediate in the catalytic mechanism.

It belongs to the amidase family. GatA subfamily. In terms of assembly, heterotrimer of A, B and C subunits.

It carries out the reaction L-glutamyl-tRNA(Gln) + L-glutamine + ATP + H2O = L-glutaminyl-tRNA(Gln) + L-glutamate + ADP + phosphate + H(+). Allows the formation of correctly charged Gln-tRNA(Gln) through the transamidation of misacylated Glu-tRNA(Gln) in organisms which lack glutaminyl-tRNA synthetase. The reaction takes place in the presence of glutamine and ATP through an activated gamma-phospho-Glu-tRNA(Gln). The polypeptide is Glutamyl-tRNA(Gln) amidotransferase subunit A (Ruthia magnifica subsp. Calyptogena magnifica).